The following is a 445-amino-acid chain: UNC93-like protein MFSD11 (445 aa).

The chain crosses the membrane as a helical span at residues 8 to 28 (LLNIIILGIGFMFMFTAFQTS). Asn40 carries an N-linked (GlcNAc...) asparagine glycan. 4 helical membrane passes run 53–73 (AIIY…VAVI), 74–94 (GCQM…AMFI), 98–118 (TWSF…LWTA), and 138–158 (IFWA…YLAW). N-linked (GlcNAc...) asparagine glycosylation is present at Asn163. Transmembrane regions (helical) follow at residues 170 to 190 (RTVF…FFLI), 239 to 259 (MLLL…YSGV), 277 to 297 (LIGL…GLFG), 309 to 329 (PVVI…YLYM), 345 to 365 (AFIN…GLGD), 385 to 405 (APAF…AFFY), and 415 to 435 (LLIL…VEWG).

The protein belongs to the unc-93 family.

It localises to the membrane. This is UNC93-like protein MFSD11 (mfsd11) from Xenopus tropicalis (Western clawed frog).